The chain runs to 660 residues: DNA mismatch repair protein MutL (660 aa).

This sequence belongs to the DNA mismatch repair MutL/HexB family.

In terms of biological role, this protein is involved in the repair of mismatches in DNA. It is required for dam-dependent methyl-directed DNA mismatch repair. May act as a 'molecular matchmaker', a protein that promotes the formation of a stable complex between two or more DNA-binding proteins in an ATP-dependent manner without itself being part of a final effector complex. The polypeptide is DNA mismatch repair protein MutL (Streptococcus equi subsp. equi (strain 4047)).